Here is a 196-residue protein sequence, read N- to C-terminus: MIDKTDITGLILAGGRGSRMGGIDKGLQNYQGMPMAMHALLRLAPQVGQAMVNANRNLGAYEAMGVPVWPDNLPDFAGPLAGLAVGLERCETPYLATVPCDCPRFPLDLVERLAGELARQDADIAMAATLQNGQLRTQPVFCLMKTSLLPSLLAFLQSGQRKIDAWTAMHRCVEVRFDDAAAFAGANTLAELQQLP.

GTP-binding positions include 12–14 (LAG), lysine 25, asparagine 53, aspartate 71, and aspartate 101. Residue aspartate 101 participates in Mg(2+) binding.

This sequence belongs to the MobA family. In terms of assembly, monomer. It depends on Mg(2+) as a cofactor.

It is found in the cytoplasm. It carries out the reaction Mo-molybdopterin + GTP + H(+) = Mo-molybdopterin guanine dinucleotide + diphosphate. Its function is as follows. Transfers a GMP moiety from GTP to Mo-molybdopterin (Mo-MPT) cofactor (Moco or molybdenum cofactor) to form Mo-molybdopterin guanine dinucleotide (Mo-MGD) cofactor. This chain is Molybdenum cofactor guanylyltransferase, found in Bordetella petrii (strain ATCC BAA-461 / DSM 12804 / CCUG 43448).